Consider the following 237-residue polypeptide: Sulfhydrogenase 2 subunit delta (237 aa).

Residues Cys11, Cys14, Cys83, Cys132, Cys160, Cys163, Cys170, and Cys179 each coordinate [4Fe-4S] cluster. Cys188, Cys192, Cys199, and Cys202 together coordinate [3Fe-4S] cluster.

The protein belongs to the [NiFe]/[NiFeSe] hydrogenase small subunit family. Dimer of heterotetramer of alpha, beta, gamma and delta subunits. The nickel-containing alpha and delta subunits constitute the hydrogenase activity. The beta and gamma subunits (flavin-containing dimer) constitute the sulfur reductase activity. Requires Ni(2+) as cofactor. The cofactor is [4Fe-4S] cluster. [3Fe-4S] cluster is required as a cofactor.

It localises to the cytoplasm. It catalyses the reaction H2 + NADP(+) = NADPH + H(+). The enzyme catalyses H2 + NAD(+) = NADH + H(+). In terms of biological role, part of a bifunctional enzyme complex that functions as a hydrogen-evolving hydrogenase with sulfur-reducing activity. May play a role in hydrogen cycling during fermentative growth. Activity exhibited with NAD in addition to NADPH. The alpha and delta subunits form the hydrogenase component that catalyzes the reduction of protons to evolve hydrogen. The polypeptide is Sulfhydrogenase 2 subunit delta (Pyrococcus furiosus (strain ATCC 43587 / DSM 3638 / JCM 8422 / Vc1)).